The sequence spans 467 residues: Acyl-lipid (8-3)-desaturase B (467 aa).

A Cytochrome b5 heme-binding domain is found at 12–89 (LKLYTWDEVS…IKQYEIGYIS (78 aa)). H47 and H70 together coordinate heme. Helical transmembrane passes span 123–143 (VSVG…VTYY) and 152–172 (FWLN…FGLH). Residues 175–179 (HDACH) carry the Histidine box-1 motif. The chain crosses the membrane as a helical span at residues 187-207 (MTWKILGATFDLFAGASFYAW). Positions 211–216 (HVIGHH) match the Histidine box-2 motif. Transmembrane regions (helical) follow at residues 293-313 (AIFI…PLIY) and 317-337 (FSHL…YLAI). The Histidine box-3 signature appears at 400–404 (QVIHH).

The protein belongs to the fatty acid desaturase type 1 family. Fe(2+) is required as a cofactor.

Its subcellular location is the membrane. The catalysed reaction is an (8Z,11Z,14Z)-icosatrienoyl-containing glycerolipid + 2 Fe(II)-[cytochrome b5] + O2 + 2 H(+) = (5Z,8Z,11Z,14Z)-eicosatetraenoyl-containing glycerolipid + 2 Fe(III)-[cytochrome b5] + 2 H2O. It carries out the reaction an (8Z,11Z,14Z,17Z)-eicosatetraenoyl-containing glycerolipid + 2 Fe(II)-[cytochrome b5] + O2 + 2 H(+) = a (5Z,8Z,11Z,14Z,17Z)-eicosapentaenoyl-containing glycerolipid + 2 Fe(III)-[cytochrome b5] + 2 H2O. In terms of biological role, fatty acid desaturase that introduces a cis double bond at the 5-position in 18-carbon polyunsaturated fatty acids. In Dictyostelium discoideum (Social amoeba), this protein is Acyl-lipid (8-3)-desaturase B (fadB).